A 906-amino-acid polypeptide reads, in one-letter code: Transmembrane channel-like protein 2 (906 aa).

Positions 1–150 are disordered; the sequence is MSHQVKGLKE…SASGGESLSE (150 aa). Residues 1–263 are Cytoplasmic-facing; it reads MSHQVKGLKE…IFLRWMYGVN (263 aa). Positions 69 to 79 are enriched in basic residues; it reads PRRKQTGRRRH. The span at 80–127 shows a compositional bias: basic and acidic residues; it reads REELGEQERGEAERTCEGRRKRDERASFQERTAAPKREKEIPRREEKS. Positions 135–147 are enriched in low complexity; the sequence is SSSLASSASGGES. The helical transmembrane segment at 264-284 threads the bilayer; that stretch reads LVLFGLIFGLVIIPEVLMGMP. The Extracellular portion of the chain corresponds to 285 to 336; it reads YGSIPRKTVPRAEEEKAMDFSVLWDFEGYIKYSALFYGYYNNQRTIGWLRYR. Residues 337-357 form a helical membrane-spanning segment; the sequence is LPMAYFMVGVSVFGYSLIIVI. The Cytoplasmic portion of the chain corresponds to 358 to 431; sequence RSMASNTQGS…NIHLTRFLRV (74 aa). The helical transmembrane segment at 432–452 threads the bilayer; sequence LANFLIICCLCGSGYLIYFVV. Residues 453–508 lie on the Extracellular side of the membrane; that stretch reads KRSQQFSKMQNVSWYERNEVEIVMSLLGMFCPPLFETIAALENYHPRTGLKWQLGR. Residues 509-529 traverse the membrane as a helical segment; that stretch reads IFALFLGNLYTFLLALMDDVH. The Cytoplasmic portion of the chain corresponds to 530 to 693; sequence LKLANEETIK…RVFKASRSNN (164 aa). The chain crosses the membrane as a helical span at residues 694–714; sequence FYMGLLLLVLFLSLLPVAYTI. The Extracellular segment spans residues 715–750; the sequence is MSLPPSFDCGPFSGKNRMYDVLQETIENDFPTFLGK. A helical membrane pass occupies residues 751–771; it reads IFAFLANPGLIIPAILLMFLA. Residues 772 to 906 lie on the Cytoplasmic side of the membrane; it reads IYYLNSVSKS…SGKSAQRPPH (135 aa). The disordered stretch occupies residues 800-906; sequence EKSHKSVKGK…SGKSAQRPPH (107 aa). Polar residues-rich tracts occupy residues 820–846, 854–866, and 886–900; these read KSSSKNATQLQLTKEETTPPSASQSQA, PGTSNSASRTTLP, and APSQTHPWRSASGKS.

The protein belongs to the TMC family. As to quaternary structure, forms the MET channel composed of TMC dimer (TMC1 or TMC2), TMIE, TOMT, CIB (CIB2 or CIB3), LHFPL5 and PDH15. The interaction of TMC1 and TMC2 with TOMT is required for the transportation of TMC1/2 into the stereocilia of hair cells. Interacts (via N-terminus) with both isoforms CD1 and CD3 of PCDH15. Can form a heterodimer with TMC1, TMC5 or TMC7. Detected in fetal cochlea.

The protein localises to the cell membrane. The enzyme catalyses Ca(2+)(in) = Ca(2+)(out). In terms of biological role, pore-forming subunit of the mechanotransducer (MET) non-selective cation channel complex located at the tips of stereocilia of cochlear hair cells and that mediates sensory transduction in the auditory system. The MET complex is composed of two dimeric pore-forming ion-conducting transmembrane TMC (TMC1 or TMC2) subunits, and aided by several auxiliary proteins including LHFPL5, TMIE, CIB2/3 and TOMT, and the tip-link PCDH15. MET channel is activated by tension in the tip-link extending from the side wall of one stereocilium to the tip of the adjacent shorter stereocilium, where the channel is located. TMC2 MET channel is highly permeable to calcium and likely transports monovalent cations. Also involved in vestibular hair cell transduction current of the mammalian inner ear. This Homo sapiens (Human) protein is Transmembrane channel-like protein 2.